Here is a 60-residue protein sequence, read N- to C-terminus: Putative potassium channel blocker TXKS1 (60 aa).

An N-terminal signal peptide occupies residues 1–28 (MNRLTTIILMLIVINVIMDDISESKVAA). Disulfide bonds link cysteine 32-cysteine 49, cysteine 35-cysteine 55, and cysteine 39-cysteine 57. Lysine amide is present on lysine 59.

Expressed by the venom gland.

Its subcellular location is the secreted. In terms of biological role, inhibits potassium channels. The polypeptide is Putative potassium channel blocker TXKS1 (Olivierus martensii (Manchurian scorpion)).